A 503-amino-acid chain; its full sequence is WD repeat-containing protein 55 homolog (503 aa).

Disordered regions lie at residues 1–21 (MHTHNNFKTPSDADELDDLDD) and 35–132 (ALVG…DDLD). 3 stretches are compositionally biased toward acidic residues: residues 12–21 (DADELDDLDD), 40–50 (DVSDSDIDEHD), and 78–96 (NAEDSSDSDDSMLEEDEAE). WD repeat units follow at residues 157-196 (KLEDFITDVCFHPDRDIIALATIIGDVHLYEYGNEGNKLL), 201-242 (VHSK…KLYE), 244-282 (AHDDAINKLHVLDENLFATGDDAGTVKLWDLRTKNPIFE), 285-324 (EVEDQITQMITNDQKKLLLATSADGYLTTFNIAARKLYVQ), 327-366 (PYEEELNCMGIYRGSSKLVVGTSKGKLYSYNWGYFGYHCD), and 411-450 (QHNMPIESLDINTSGELLASSSHNNDVRFWNVKYFEDFGD). Positions 483 to 503 (TKEDEDNADNNDAAAGPSNSA) are disordered.

This sequence belongs to the WD repeat WDR55 family.

The protein is WD repeat-containing protein 55 homolog of Drosophila persimilis (Fruit fly).